The primary structure comprises 251 residues: Protein CMS1 (251 aa).

Residues 1–37 (MSLDNDINTKKRKLQDDEKPRKKRKHKRPTRDDDADL) are disordered.

It belongs to the CMS1 family.

The protein resides in the nucleus. May play a role in the regulation of DNA replication and cell cycle control. This is Protein CMS1 (CSM1) from Chaetomium thermophilum (strain DSM 1495 / CBS 144.50 / IMI 039719) (Thermochaetoides thermophila).